The chain runs to 464 residues: Argininosuccinate lyase (464 aa).

Belongs to the lyase 1 family. Argininosuccinate lyase subfamily.

It localises to the cytoplasm. The enzyme catalyses 2-(N(omega)-L-arginino)succinate = fumarate + L-arginine. The protein operates within amino-acid biosynthesis; L-arginine biosynthesis; L-arginine from L-ornithine and carbamoyl phosphate: step 3/3. This is Argininosuccinate lyase from Sulfurovum sp. (strain NBC37-1).